An 83-amino-acid chain; its full sequence is Cell division topological specificity factor (83 aa).

It belongs to the MinE family.

Prevents the cell division inhibition by proteins MinC and MinD at internal division sites while permitting inhibition at polar sites. This ensures cell division at the proper site by restricting the formation of a division septum at the midpoint of the long axis of the cell. The polypeptide is Cell division topological specificity factor (Buchnera aphidicola subsp. Schizaphis graminum (strain Sg)).